A 452-amino-acid chain; its full sequence is tRNA-2-methylthio-N(6)-dimethylallyladenosine synthase (452 aa).

The 116-residue stretch at 3–118 (KKVFIKTYGC…LPQLLAERER (116 aa)) folds into the MTTase N-terminal domain. [4Fe-4S] cluster is bound by residues cysteine 12, cysteine 49, cysteine 81, cysteine 155, cysteine 159, and cysteine 162. A Radical SAM core domain is found at 141–379 (RVEGASAFVS…QTVINDSIKR (239 aa)). The TRAM domain maps to 382-445 (ESRLGTVQRI…SFTLRGEVVT (64 aa)).

The protein belongs to the methylthiotransferase family. MiaB subfamily. Monomer. [4Fe-4S] cluster serves as cofactor.

The protein localises to the cytoplasm. It carries out the reaction N(6)-dimethylallyladenosine(37) in tRNA + (sulfur carrier)-SH + AH2 + 2 S-adenosyl-L-methionine = 2-methylsulfanyl-N(6)-dimethylallyladenosine(37) in tRNA + (sulfur carrier)-H + 5'-deoxyadenosine + L-methionine + A + S-adenosyl-L-homocysteine + 2 H(+). In terms of biological role, catalyzes the methylthiolation of N6-(dimethylallyl)adenosine (i(6)A), leading to the formation of 2-methylthio-N6-(dimethylallyl)adenosine (ms(2)i(6)A) at position 37 in tRNAs that read codons beginning with uridine. The polypeptide is tRNA-2-methylthio-N(6)-dimethylallyladenosine synthase (Albidiferax ferrireducens (strain ATCC BAA-621 / DSM 15236 / T118) (Rhodoferax ferrireducens)).